The sequence spans 373 residues: L-threonine 3-dehydrogenase, mitochondrial (373 aa).

Residues 62 to 67 (GGLGQL), 88 to 90 (DIR), 106 to 107 (DI), Tyr-195, Lys-199, and Ile-225 contribute to the NAD(+) site. The Proton donor/acceptor role is filled by Tyr-195.

The protein belongs to the NAD(P)-dependent epimerase/dehydratase family. In terms of assembly, homodimer.

The protein localises to the mitochondrion. The enzyme catalyses L-threonine + NAD(+) = (2S)-2-amino-3-oxobutanoate + NADH + H(+). Its pathway is amino-acid degradation; L-threonine degradation via oxydo-reductase pathway; glycine from L-threonine: step 1/2. In terms of biological role, catalyzes the NAD(+)-dependent oxidation of L-threonine to 2-amino-3-ketobutyrate, mediating L-threonine catabolism. This Bos taurus (Bovine) protein is L-threonine 3-dehydrogenase, mitochondrial.